A 1456-amino-acid polypeptide reads, in one-letter code: Alpha-2-macroglobulin-like protein 1 (1456 aa).

The N-terminal stretch at 1–19 (MVPTILLSALLLHFTDVVA) is a signal peptide. N-linked (GlcNAc...) asparagine glycosylation is found at N48, N172, and N868.

Belongs to the protease inhibitor I39 (alpha-2-macroglobulin) family. Homotetramer; consists of two dimer pairs that are disulfide-linked. Part of a complex composed of complement component C3, CLCA1/CLCA3, A2ML1/OH and ALB/serum albumin.

The protein localises to the secreted. In terms of biological role, inhibits protease gelatinolytic complex activity against type 1 collagen. This is Alpha-2-macroglobulin-like protein 1 from Mus musculus (Mouse).